Consider the following 253-residue polypeptide: 2-C-methyl-D-erythritol 4-phosphate cytidylyltransferase (253 aa).

This sequence belongs to the IspD/TarI cytidylyltransferase family. IspD subfamily.

It carries out the reaction 2-C-methyl-D-erythritol 4-phosphate + CTP + H(+) = 4-CDP-2-C-methyl-D-erythritol + diphosphate. Its pathway is isoprenoid biosynthesis; isopentenyl diphosphate biosynthesis via DXP pathway; isopentenyl diphosphate from 1-deoxy-D-xylulose 5-phosphate: step 2/6. Its function is as follows. Catalyzes the formation of 4-diphosphocytidyl-2-C-methyl-D-erythritol from CTP and 2-C-methyl-D-erythritol 4-phosphate (MEP). The polypeptide is 2-C-methyl-D-erythritol 4-phosphate cytidylyltransferase (Chlorobium chlorochromatii (strain CaD3)).